The chain runs to 778 residues: MEKKILEQLEFEKVKEQFWPYLQTEQGQLELDLLEPIANKDKIQAYFTELEEMAAIFVEHHHFALGGLSDVSESMQRLDLEADLSIQELLAVKKLLQVSAEVCRFYADLENVDLVALKALFEKIESFPSLQGSLQAINDAGFVEGFASPELESIRRQISNKEHASRQLLQDILKKQAAYLSESLIASRNGRSVLPVKNTYRHKVAGVVHDMSASGSTVYIEPRALVSLNEELTQLQTDERHEIGRILHELSEQLRPHSRSLRNNAWLLGHLDLVRAKYLYMQAKQATVPVISDDKSLQLLNARHPLIQNPVANDLHFANDLAVIVITGPNTGGKTIMLKTLGLAQVMAQSGLPILADKGSRVAVFNGIYADIGDEQSIEQSLSTFSSHMTHIVEILNQADSDSLILFDELGAGTDPQEGASLAMAILEQLRLTNIKTMATTHYPELKAYGIETAYVENASMAFDNVSLKPTYRFMQGVPGRSNAFDIARRLGLAEHIVKEAQAMTATDHDVNRIIEQLEQQTLESRKRLEHIKEVEQDNLKFNRAVKKLYNEFSHAKDKELEKAALEAREIVDIALAESDSILSQLHEKAELKPHEIIEAKHRLKQLAPEQSLSQNKVLKKAKKWRAPRVGDDIIVTAYGQRGTLLAQLKDKRWEAQVGLIKLTLKEDEFSLVKLKEEAQQPKKRAVKVVKKAATGKGPRARLDLRGKRYEEAMQELDAFIDQALLNNMSQVDIIHGIGTGVIREAVGKYLRRNKHVKSFGYAPQNAGGSGCTIANLG.

Residue 328–335 (GPNTGGKT) coordinates ATP. The 76-residue stretch at 703–778 (LDLRGKRYEE…GSGCTIANLG (76 aa)) folds into the Smr domain.

It belongs to the DNA mismatch repair MutS family. MutS2 subfamily. As to quaternary structure, homodimer. Binds to stalled ribosomes, contacting rRNA.

Functionally, endonuclease that is involved in the suppression of homologous recombination and thus may have a key role in the control of bacterial genetic diversity. In terms of biological role, acts as a ribosome collision sensor, splitting the ribosome into its 2 subunits. Detects stalled/collided 70S ribosomes which it binds and splits by an ATP-hydrolysis driven conformational change. Acts upstream of the ribosome quality control system (RQC), a ribosome-associated complex that mediates the extraction of incompletely synthesized nascent chains from stalled ribosomes and their subsequent degradation. Probably generates substrates for RQC. This chain is Endonuclease MutS2, found in Streptococcus equi subsp. equi (strain 4047).